Here is a 141-residue protein sequence, read N- to C-terminus: Sigma factor binding protein 2, chloroplastic (141 aa).

Polar residues predominate over residues 1 to 20 (MDQSSSTLLINQRKSSSSPT). A disordered region spans residues 1 to 36 (MDQSSSTLLINQRKSSSSPTRIPPKQKRKSTTTHKP). A chloroplast-targeting transit peptide spans 1–38 (MDQSSSTLLINQRKSSSSPTRIPPKQKRKSTTTHKPIK). Residues 13–29 (RKSSSSPTRIPPKQKRK) carry the Bipartite nuclear localization signal motif. Residues 24 to 36 (PKQKRKSTTTHKP) are compositionally biased toward basic residues. Positions 55-64 (FRELVQELTG) match the VQ motif.

Interacts with sigma factors in chloroplast. Interacts with WRKY33 in the nucleus.

It is found in the plastid. Its subcellular location is the chloroplast. The protein resides in the nucleus. Functions as activator of WRKY33 in plant defense against necrotrophic pathogens by stimulating the DNA-binding activity of WRKY33. This is Sigma factor binding protein 2, chloroplastic (SIB2) from Arabidopsis thaliana (Mouse-ear cress).